A 402-amino-acid chain; its full sequence is Serine--glyoxylate aminotransferase (402 aa).

Lys201 bears the N6-(pyridoxal phosphate)lysine mark.

It belongs to the class-V pyridoxal-phosphate-dependent aminotransferase family. Requires pyridoxal 5'-phosphate as cofactor.

It carries out the reaction glyoxylate + L-serine = 3-hydroxypyruvate + glycine. The protein operates within one-carbon metabolism; formaldehyde assimilation via serine pathway. This chain is Serine--glyoxylate aminotransferase, found in Methylorubrum extorquens (strain ATCC 14718 / DSM 1338 / JCM 2805 / NCIMB 9133 / AM1) (Methylobacterium extorquens).